A 194-amino-acid polypeptide reads, in one-letter code: Glycerol-3-phosphate acyltransferase (194 aa).

The next 5 helical transmembrane spans lie at 2 to 22, 51 to 71, 80 to 100, 112 to 132, and 155 to 175; these read LIEI…TGLL, SVGI…VLAA, WIAL…FLGF, VFLG…VAVV, and FLSG…LVIW.

This sequence belongs to the PlsY family. As to quaternary structure, probably interacts with PlsX.

It is found in the cell inner membrane. It catalyses the reaction an acyl phosphate + sn-glycerol 3-phosphate = a 1-acyl-sn-glycero-3-phosphate + phosphate. The protein operates within lipid metabolism; phospholipid metabolism. In terms of biological role, catalyzes the transfer of an acyl group from acyl-phosphate (acyl-PO(4)) to glycerol-3-phosphate (G3P) to form lysophosphatidic acid (LPA). This enzyme utilizes acyl-phosphate as fatty acyl donor, but not acyl-CoA or acyl-ACP. This Geobacter metallireducens (strain ATCC 53774 / DSM 7210 / GS-15) protein is Glycerol-3-phosphate acyltransferase.